The chain runs to 143 residues: Transcriptional regulator MraZ (143 aa).

SpoVT-AbrB domains are found at residues 5–47 and 76–119; these read TFTP…PREE and ADEQ…DAQA.

It belongs to the MraZ family. Forms oligomers.

It is found in the cytoplasm. The protein localises to the nucleoid. The polypeptide is Transcriptional regulator MraZ (Corynebacterium urealyticum (strain ATCC 43042 / DSM 7109)).